The chain runs to 84 residues: Large ribosomal subunit protein bL31B (84 aa).

It belongs to the bacterial ribosomal protein bL31 family. Type B subfamily. As to quaternary structure, part of the 50S ribosomal subunit.

Its function is as follows. Binds the 23S rRNA. The chain is Large ribosomal subunit protein bL31B from Rhodococcus jostii (strain RHA1).